Here is a 337-residue protein sequence, read N- to C-terminus: tRNA N6-adenosine threonylcarbamoyltransferase (337 aa).

Positions 111 and 115 each coordinate Fe cation. Residues 134–138 (LVSGG), D167, G180, and N272 each bind substrate. Fe cation is bound at residue D300.

It belongs to the KAE1 / TsaD family. The cofactor is Fe(2+).

The protein localises to the cytoplasm. It carries out the reaction L-threonylcarbamoyladenylate + adenosine(37) in tRNA = N(6)-L-threonylcarbamoyladenosine(37) in tRNA + AMP + H(+). Required for the formation of a threonylcarbamoyl group on adenosine at position 37 (t(6)A37) in tRNAs that read codons beginning with adenine. Is involved in the transfer of the threonylcarbamoyl moiety of threonylcarbamoyl-AMP (TC-AMP) to the N6 group of A37, together with TsaE and TsaB. TsaD likely plays a direct catalytic role in this reaction. The chain is tRNA N6-adenosine threonylcarbamoyltransferase from Salmonella newport (strain SL254).